Here is a 355-residue protein sequence, read N- to C-terminus: Nuclear speckle splicing regulatory protein 1 homolog (355 aa).

Positions 1–57 (MSGTGFRYGLNVMKKKKPNESSNRITFTEDDSSSSEQEHAPIPNSFSSQITAASDAS) are disordered. Positions 44–54 (NSFSSQITAAS) are enriched in polar residues. Residues 99 to 162 (MENLIESAKK…EDRKEEDEKS (64 aa)) are a coiled coil. Disordered stretches follow at residues 253-292 (SANNSMRDDKKRNHKSSYKRSLSPSTRYHQDRPDKRHGTY) and 325-355 (KIHASRNTTETQVQSARERYLQRKKKAATNP). The segment covering 280–289 (YHQDRPDKRH) has biased composition (basic and acidic residues). The stretch at 293-326 (SLEEIDKQRKEFENRQRLQKEKEFQKSREAALKI) forms a coiled coil. Polar residues predominate over residues 329–339 (SRNTTETQVQS). Residues 346 to 355 (QRKKKAATNP) are compositionally biased toward basic residues.

The protein belongs to the NSRP1 family.

The polypeptide is Nuclear speckle splicing regulatory protein 1 homolog (Schizosaccharomyces pombe (strain 972 / ATCC 24843) (Fission yeast)).